Consider the following 281-residue polypeptide: Bis(5'-nucleosyl)-tetraphosphatase, symmetrical (281 aa).

Belongs to the Ap4A hydrolase family.

It catalyses the reaction P(1),P(4)-bis(5'-adenosyl) tetraphosphate + H2O = 2 ADP + 2 H(+). Hydrolyzes diadenosine 5',5'''-P1,P4-tetraphosphate to yield ADP. The chain is Bis(5'-nucleosyl)-tetraphosphatase, symmetrical from Delftia acidovorans (strain DSM 14801 / SPH-1).